The sequence spans 385 residues: Interleukin-13 receptor subunit alpha-2 (385 aa).

The first 23 residues, 1–23 (MALMAVNTRCLCLFLLCTITGHS), serve as a signal peptide directing secretion. The Extracellular segment spans residues 24–336 (LEIKVNPPQD…WEGYTGPDSK (313 aa)). 3 Fibronectin type-III domains span residues 30–130 (PPQD…ADEG), 133–221 (GTKI…PIRS), and 236–334 (PPEF…TGPD). An intrachain disulfide couples cysteine 61 to cysteine 109. N-linked (GlcNAc...) asparagine glycosylation is present at asparagine 111. Cysteine 141 and cysteine 151 are disulfide-bonded. Asparagine 164 carries N-linked (GlcNAc...) asparagine glycosylation. An intrachain disulfide couples cysteine 180 to cysteine 193. 2 N-linked (GlcNAc...) asparagine glycosylation sites follow: asparagine 211 and asparagine 295. A disulfide bridge connects residues cysteine 265 and cysteine 312. The WSXWS motif signature appears at 318–322 (WSEWS). A helical transmembrane segment spans residues 337–357 (IVFIVPVCLFFIFLLLLLCLI). The Cytoplasmic portion of the chain corresponds to 358–385 (VEKEDPEPTLSLHVDLNKEMYAYEETLC).

This sequence belongs to the type I cytokine receptor family. Type 5 subfamily. In terms of assembly, interacts with IL4RA. Interacts with high affinity to interleukin-13 (IL13), but not to interleukin-4 (IL4). In terms of processing, cleaved by MMP8 leading to a soluble form that is also able to interact with IL13.

It localises to the cell membrane. Functionally, cell surface receptor that plays a role in the regulation of IL-13-mediated responses. Functions as a decoy receptor that inhibits IL-13- and IL-4-mediated signal transduction via the JAK-STAT pathway and thereby modulates immune responses and inflammation. Serves as a functional signaling receptor for IL-13 in an alternative pathway involving AP-1 ultimately leading to the production of TGFB1. The polypeptide is Interleukin-13 receptor subunit alpha-2 (Il13ra2) (Rattus norvegicus (Rat)).